We begin with the raw amino-acid sequence, 96 residues long: Putative pterin-4-alpha-carbinolamine dehydratase (96 aa).

It belongs to the pterin-4-alpha-carbinolamine dehydratase family.

It carries out the reaction (4aS,6R)-4a-hydroxy-L-erythro-5,6,7,8-tetrahydrobiopterin = (6R)-L-erythro-6,7-dihydrobiopterin + H2O. The protein is Putative pterin-4-alpha-carbinolamine dehydratase of Paraburkholderia phytofirmans (strain DSM 17436 / LMG 22146 / PsJN) (Burkholderia phytofirmans).